We begin with the raw amino-acid sequence, 1295 residues long: Phosphoribosylformylglycinamidine synthase (1295 aa).

The interval 305 to 327 (WPGAATGSGGEIRDEGATGRGAK) is disordered. ATP contacts are provided by residues 307-318 (GAATGSGGEIRD) and Ala-678. Residues Glu-718, Asn-722, and Asp-884 each coordinate Mg(2+). Ser-886 serves as a coordination point for ATP. The 254-residue stretch at 1042–1295 (VAVLREQGVN…IFRNARKQLG (254 aa)) folds into the Glutamine amidotransferase type-1 domain. Residue Cys-1135 is the Nucleophile of the active site. Catalysis depends on residues His-1260 and Glu-1262.

In the N-terminal section; belongs to the FGAMS family. In terms of assembly, monomer.

The protein resides in the cytoplasm. The enzyme catalyses N(2)-formyl-N(1)-(5-phospho-beta-D-ribosyl)glycinamide + L-glutamine + ATP + H2O = 2-formamido-N(1)-(5-O-phospho-beta-D-ribosyl)acetamidine + L-glutamate + ADP + phosphate + H(+). It participates in purine metabolism; IMP biosynthesis via de novo pathway; 5-amino-1-(5-phospho-D-ribosyl)imidazole from N(2)-formyl-N(1)-(5-phospho-D-ribosyl)glycinamide: step 1/2. Phosphoribosylformylglycinamidine synthase involved in the purines biosynthetic pathway. Catalyzes the ATP-dependent conversion of formylglycinamide ribonucleotide (FGAR) and glutamine to yield formylglycinamidine ribonucleotide (FGAM) and glutamate. The chain is Phosphoribosylformylglycinamidine synthase from Shigella sonnei (strain Ss046).